The chain runs to 56 residues: Large ribosomal subunit protein bL32 (56 aa).

A disordered region spans residues 1–26 (MAVQQNKKSRSKRGMRRSHDALSTAQ). Residues 7–16 (KKSRSKRGMR) are compositionally biased toward basic residues.

The protein belongs to the bacterial ribosomal protein bL32 family.

This chain is Large ribosomal subunit protein bL32, found in Shewanella amazonensis (strain ATCC BAA-1098 / SB2B).